Here is a 217-residue protein sequence, read N- to C-terminus: Uracil-DNA glycosylase (217 aa).

Aspartate 62 serves as the catalytic Proton acceptor.

It belongs to the uracil-DNA glycosylase (UDG) superfamily. UNG family.

The protein localises to the cytoplasm. It carries out the reaction Hydrolyzes single-stranded DNA or mismatched double-stranded DNA and polynucleotides, releasing free uracil.. Excises uracil residues from the DNA which can arise as a result of misincorporation of dUMP residues by DNA polymerase or due to deamination of cytosine. The chain is Uracil-DNA glycosylase from Streptococcus pyogenes serotype M1.